A 394-amino-acid chain; its full sequence is Elongation factor Tu (394 aa).

The 195-residue stretch at 10–204 folds into the tr-type G domain; the sequence is KPHLNVGTIG…ALDTYIPLPE (195 aa). Positions 19-26 are G1; it reads GHVDHGKT. 19-26 is a binding site for GTP; sequence GHVDHGKT. A Mg(2+)-binding site is contributed by threonine 26. The segment at 60–64 is G2; it reads GITIN. Positions 81 to 84 are G3; it reads DCPG. Residues 81-85 and 136-139 each bind GTP; these read DCPGH and NKCD. The tract at residues 136–139 is G4; it reads NKCD. Residues 174 to 176 form a G5 region; the sequence is SAL.

Belongs to the TRAFAC class translation factor GTPase superfamily. Classic translation factor GTPase family. EF-Tu/EF-1A subfamily. Monomer.

Its subcellular location is the cytoplasm. The enzyme catalyses GTP + H2O = GDP + phosphate + H(+). Its function is as follows. GTP hydrolase that promotes the GTP-dependent binding of aminoacyl-tRNA to the A-site of ribosomes during protein biosynthesis. In Psychromonas ingrahamii (strain DSM 17664 / CCUG 51855 / 37), this protein is Elongation factor Tu.